Consider the following 1382-residue polypeptide: MKAPTALAPGILLLLLTLAQRSHGECKEALVKSEMNVNMKYQLPNFTAETPIHNVVLPGHHIYLGATNYIYVLNDKDLQKVSEFKTGPVVEHPDCFPCQDCSSKANVSGGVWKDNVNMALLVDTYYDDQLISCGSVNRGTCQRHVLPPDNAADIQSEVHCMFSPLAEEESGQCPDCVVSALGAKVLLSEKDRFINFFVGNTINSSYPPDYSLHSISVRRLKETQDGFKFLTDQSYIDVLPEFRDSYPIKYIHAFESNHFIYFLTVQKETLDAQTFHTRIIRFCSVDSGLHSYMEMPLECILTEKRRKRSTREEVFNILQAAYVSKPGANLAKQIGASPYDDILYGVFAQSKPDSAEPMNRSAVCAFPIKYVNDFFNKIVNKNNVRCLQHFYGPNHEHCFNRTLLRNSSGCEVRSDEYRTEFTTALQRVDLFMGRLNHVLLTSISTFIKGDLTIANLGTSEGRFMQVVLSRTAHFTPHVNFLLDSYPVSPEVIVEHPSNQNGYTLVVTGKKITKIPLNGLGCGHFQSCSQCLSPPYFIQCGWCHNRCVHSNECPSGTWTQEICLPAVYKVFPTSAPLEGGTMLTICGWDFGFKKNNKFDLRKTKVLLGNESCTLTLSESTTNTLKCTVGPAMSEHFNVSVIVSNSRETTQYSAFSYVDPVITSISPRYGPHAGGTLLTLTGKYLNSGNSRHISIGGKTCTLKSVSDSILECYTPGHTVSAEFPVKLKIDLADRVTSSFSYREDPVVSEIHPTKSFISGGSTITGIGKNLNSVSTPKLVIEVHDVGVNYTVACQHRSSSEIICCTTPSLRQLDLQLPLKTKAFFLLDGILSKHFDLTYVHDPMFKPFEKPVMISMGNENVVEIKGDDIDPEAVKGEVLKVGNKSCENLHWHSEALLCTVPSDLLKLNGGELNIEWKQAVSSTVLGKVIVQPDQNFAGLIIGAVSISVVVLLVSGLFLWLRKRKHKDLGSELVRYDARVHTPHLDRLVSARSVSPTTEMVSNESVDYRATFPEDQFPNSSQNGACRQVQYLLTDLSPILTSGDSDISSPLLQNTVHIDLSALNPELVQAVPHVVIGPSSLIVHFNEVIGRGHFGCVYHGTLLDSDGKKIHCAVKSLNRITDIEEVSQFLTEGIIMKDFSHPNVLSLLGICLRSEGSPLVVLPYMKHGDLRNFIRNETHNPTVKDLIGFGLQVAKGMKYLVSKKFVHRDLAARNCMLDEKFTVKVADFGLARDMYDKEYYSVHNKTGAKLPVKWMALESLQTQKFTTKSDVWSFGVLLWELMTRGAPPYPDVNTFDITIYLLQGRRLLQPEYCPDALYEVMLKCWHPKAEMRPSVSELVSRISSIFSTFIGEHYVHVNATYVNVKCVAPYPSLLPSQDNIDGEANT.

The first 24 residues, 1 to 24 (MKAPTALAPGILLLLLTLAQRSHG), serve as a signal peptide directing secretion. The Extracellular portion of the chain corresponds to 25–935 (ECKEALVKSE…IVQPDQNFAG (911 aa)). The 490-residue stretch at 27–516 (KEALVKSEMN…TGKKITKIPL (490 aa)) folds into the Sema domain. Residue Asn45 is glycosylated (N-linked (GlcNAc...) asparagine). 4 disulfides stabilise this stretch: Cys95/Cys101, Cys98/Cys160, Cys133/Cys141, and Cys173/Cys176. Asn106 carries an N-linked (GlcNAc...) asparagine glycan. Residues Asn203 and Asn359 are each glycosylated (N-linked (GlcNAc...) asparagine). 2 disulfides stabilise this stretch: Cys299–Cys364 and Cys386–Cys398. 2 N-linked (GlcNAc...) asparagine glycosylation sites follow: Asn400 and Asn406. 4 disulfides stabilise this stretch: Cys521/Cys539, Cys527/Cys562, Cys530/Cys546, and Cys542/Cys552. IPT/TIG domains follow at residues 564–656 (PAVY…FSYV), 658–740 (PVIT…FSYR), and 743–837 (PVVS…LTYV). Residue Thr583 is glycosylated (O-linked (Man) threonine). Residues Asn608 and Asn636 are each glycosylated (N-linked (GlcNAc...) asparagine). 2 O-linked (Man) threonine glycosylation sites follow: Thr677 and Thr762. 2 N-linked (GlcNAc...) asparagine glycosylation sites follow: Asn786 and Asn880. A helical membrane pass occupies residues 936 to 956 (LIIGAVSISVVVLLVSGLFLW). Topologically, residues 957 to 1379 (LRKRKHKDLG…LPSQDNIDGE (423 aa)) are cytoplasmic. Ser967 carries the phosphoserine modification. Thr978 is subject to Phosphothreonine. Residues Ser991, Ser998, and Ser1001 each carry the phosphoserine modification. Tyr1004 carries the post-translational modification Phosphotyrosine. A Protein kinase domain is found at 1079-1346 (VHFNEVIGRG…RISSIFSTFI (268 aa)). Residues 1085-1093 (IGRGHFGCV) and Lys1111 each bind ATP. The active-site Proton acceptor is the Asp1205. Residues 1213–1382 (LDEKFTVKVA…QDNIDGEANT (170 aa)) are interaction with RANBP9. Position 1231 is a phosphotyrosine (Tyr1231). Phosphotyrosine; by autocatalysis is present on residues Tyr1235 and Tyr1236. Phosphothreonine is present on Thr1290. The interaction with MUC20 stretch occupies residues 1321–1360 (WHPKAEMRPSVSELVSRISSIFSTFIGEHYVHVNATYVNV). Phosphotyrosine; by autocatalysis occurs at positions 1350 and 1357. Tyr1366 carries the post-translational modification Phosphotyrosine.

This sequence belongs to the protein kinase superfamily. Tyr protein kinase family. In terms of assembly, heterodimer made of an alpha chain (50 kDa) and a beta chain (145 kDa) which are disulfide linked. Binds PLXNB1. Interacts when phosphorylated with downstream effectors including STAT3, PIK3R1, SRC, PCLG1, GRB2 and GAB1. Interacts with SPSB1, SPSB2 and SPSB4. Interacts with INPP5D/SHIP1. When phosphorylated at Tyr-1357, interacts with INPPL1/SHIP2. Interacts with RANBP9 and RANBP10, as well as SPSB1, SPSB2, SPSB3 and SPSB4. SPSB1 binding occurs in the presence and in the absence of HGF, however HGF treatment has a positive effect on this interaction. Interacts with MUC20; prevents interaction with GRB2 and suppresses hepatocyte growth factor-induced cell proliferation. Interacts with GRB10. Interacts with PTPN1 and PTPN2. Interacts with HSP90AA1 and HSP90AB1; the interaction suppresses MET kinase activity. Interacts with tensin TNS3. Interacts (when phosphorylated) with tensin TNS4 (via SH2 domain); the interaction increases MET protein stability by inhibiting MET endocytosis and subsequent lysosomal degradation. In terms of processing, autophosphorylated in response to ligand binding on Tyr-1235 and Tyr-1236 in the kinase domain leading to further phosphorylation of Tyr-1350 and Tyr-1357 in the C-terminal multifunctional docking site. Dephosphorylated by PTPRJ at Tyr-1350 and Tyr-1366. Dephosphorylated by PTPN1 and PTPN2. Ubiquitinated. Ubiquitination by CBL regulates the receptor stability and activity through proteasomal degradation. Post-translationally, O-mannosylation of IPT/TIG domains by TMEM260 is required for protein maturation. O-mannosylated residues are composed of single mannose glycans that are not elongated or modified. Expressed at highest levels in lung, liver and kidney, also expressed in stomach, intestine, spleen, testis and brain. Not expressed in heart or muscle.

Its subcellular location is the membrane. It catalyses the reaction L-tyrosyl-[protein] + ATP = O-phospho-L-tyrosyl-[protein] + ADP + H(+). Its activity is regulated as follows. In its inactive state, the C-terminal tail interacts with the catalytic domain and inhibits the kinase activity. Upon ligand binding, the C-terminal tail is displaced and becomes phosphorylated, thus increasing the kinase activity. In terms of biological role, receptor tyrosine kinase that transduces signals from the extracellular matrix into the cytoplasm by binding to hepatocyte growth factor/HGF ligand. Regulates many physiological processes including proliferation, scattering, morphogenesis and survival. Ligand binding at the cell surface induces autophosphorylation of MET on its intracellular domain that provides docking sites for downstream signaling molecules. Following activation by ligand, interacts with the PI3-kinase subunit PIK3R1, PLCG1, SRC, GRB2, STAT3 or the adapter GAB1. Recruitment of these downstream effectors by MET leads to the activation of several signaling cascades including the RAS-ERK, PI3 kinase-AKT, or PLCgamma-PKC. The RAS-ERK activation is associated with the morphogenetic effects while PI3K/AKT coordinates prosurvival effects. During embryonic development, MET signaling plays a role in gastrulation, development and migration of muscles and neuronal precursors, angiogenesis and kidney formation. In adults, participates in wound healing as well as organ regeneration and tissue remodeling. Also promotes differentiation and proliferation of hematopoietic cells. In Rattus norvegicus (Rat), this protein is Hepatocyte growth factor receptor (Met).